We begin with the raw amino-acid sequence, 366 residues long: MALPPGPAALRHTLLLLPALLSSGWGELEPQIDGQTWAERALRENERHAFTCRVAGGPGTPRLAWYLDGQLQEASTSRLLSVGGEAFSGGTSTFTVTAHRAQHELNCSLQDPRSGRSANASVILNVQFKPEIAQVGAKYQEAQGPGLLVVLFALVRANPPANVTWIDQDGPVTVNTSDFLVLDAQNYPWLTNHTVQLQLRSLAHNLSVVATNDVGVTSASLPAPGLLATRVEVPLLGIVVAAGLALGTLVGFSTLVACLVCRKEKKTKGPSRHPSLISSDSNNLKLNNVRLPRENMSLPSNLQLNDLTPDSRAVKPADRQMAQNNSRPELLDPEPGGLLTSQGFIRLPVLGYIYRVSSVSSDEIWL.

The N-terminal stretch at 1-26 is a signal peptide; that stretch reads MALPPGPAALRHTLLLLPALLSSGWG. The Extracellular segment spans residues 27 to 232; that stretch reads ELEPQIDGQT…APGLLATRVE (206 aa). Residues 30–123 form the Ig-like domain; that stretch reads PQIDGQTWAE…SGRSANASVI (94 aa). A disulfide bridge links Cys-52 with Cys-107. 5 N-linked (GlcNAc...) asparagine glycosylation sites follow: Asn-106, Asn-162, Asn-175, Asn-192, and Asn-205. Residues 233 to 253 traverse the membrane as a helical segment; that stretch reads VPLLGIVVAAGLALGTLVGFS. Over 254 to 366 the chain is Cytoplasmic; that stretch reads TLVACLVCRK…SSVSSDEIWL (113 aa). Positions 299–308 are enriched in polar residues; that stretch reads PSNLQLNDLT. Positions 299–335 are disordered; it reads PSNLQLNDLTPDSRAVKPADRQMAQNNSRPELLDPEP.

In terms of assembly, interacts with GRIN2B. In terms of tissue distribution, expressed throughout the brain with higher levels in the pyramidal cell layer of the hippocampal CA1 and CA3 regions. Also highly expressed within the hippocampal dentate gyrus region and cerebellum and in scattered neurons in the cerebral cortex.

Its subcellular location is the cell membrane. It localises to the secreted. The protein localises to the late endosome. The protein resides in the lysosome. Functionally, in neurons, modulates the degradation of NMDA receptor GRIN2B subunit. Plays a role in the regulation of neuronal excitability. The protein is Transmembrane protein 25 (TMEM25) of Homo sapiens (Human).